Consider the following 107-residue polypeptide: Iron-binding protein IscA (107 aa).

Residues cysteine 35, cysteine 99, and cysteine 101 each contribute to the Fe cation site.

The protein belongs to the HesB/IscA family. In terms of assembly, homodimer; may form tetramers and higher multimers. The cofactor is Fe cation.

Its function is as follows. Is able to transfer iron-sulfur clusters to apo-ferredoxin. Multiple cycles of [2Fe2S] cluster formation and transfer are observed, suggesting that IscA acts catalytically. Recruits intracellular free iron so as to provide iron for the assembly of transient iron-sulfur cluster in IscU in the presence of IscS, L-cysteine and the thioredoxin reductase system TrxA/TrxB. The sequence is that of Iron-binding protein IscA from Enterobacter sp. (strain 638).